We begin with the raw amino-acid sequence, 597 residues long: Cytosolic phospholipase A2 gamma (597 aa).

The PLA2c domain maps to 1–597 (MELSSGVCPA…FKKSHNISKD (597 aa)). The Nucleophile role is filled by Ser83. The active-site Proton acceptor is the Asp417. Residues 576–597 (RVKDPQGSQTVEFKKSHNISKD) form a disordered region. Residues 587–597 (EFKKSHNISKD) are compositionally biased toward basic and acidic residues.

In terms of tissue distribution, highly expressed in ovary, where it localizes to oocytes in preantral and antral stage follicles (at protein level). Not detected in other tissues tested.

It localises to the nucleus. The protein resides in the nucleoplasm. Its subcellular location is the nucleus envelope. It is found in the cytoplasm. The protein localises to the cell cortex. It localises to the cytoskeleton. The protein resides in the spindle. The enzyme catalyses a 1,2-diacyl-sn-glycero-3-phosphocholine + H2O = a 1-acyl-sn-glycero-3-phosphocholine + a fatty acid + H(+). It catalyses the reaction a 1-O-alkyl-2-acyl-sn-glycero-3-phosphocholine + H2O = a 1-O-alkyl-sn-glycero-3-phosphocholine + a fatty acid + H(+). It carries out the reaction 1,2-dihexadecanoyl-sn-glycero-3-phosphocholine + H2O = 1-hexadecanoyl-sn-glycero-3-phosphocholine + hexadecanoate + H(+). The catalysed reaction is 1-hexadecanoyl-2-(9Z-octadecenoyl)-sn-glycero-3-phosphocholine + H2O = 1-hexadecanoyl-sn-glycero-3-phosphocholine + (9Z)-octadecenoate + H(+). The enzyme catalyses 1-hexadecanoyl-2-(9Z,12Z-octadecadienoyl)-sn-glycero-3-phosphocholine + H2O = (9Z,12Z)-octadecadienoate + 1-hexadecanoyl-sn-glycero-3-phosphocholine + H(+). It catalyses the reaction 1-hexadecanoyl-2-(5Z,8Z,11Z,14Z-eicosatetraenoyl)-sn-glycero-3-phosphocholine + H2O = 1-hexadecanoyl-sn-glycero-3-phosphocholine + (5Z,8Z,11Z,14Z)-eicosatetraenoate + H(+). It carries out the reaction 1-O-hexadecyl-2-(5Z,8Z,11Z,14Z)-eicosatetraenoyl-sn-glycero-3-phosphocholine + H2O = 1-O-hexadecyl-sn-glycero-3-phosphocholine + (5Z,8Z,11Z,14Z)-eicosatetraenoate + H(+). The catalysed reaction is 1-hexadecanoyl-2-(5Z,8Z,11Z,14Z-eicosatetraenoyl)-sn-glycero-3-phosphocholine + H2O = 2-(5Z,8Z,11Z,14Z)-eicosatetraenoyl-sn-glycero-3-phosphocholine + hexadecanoate + H(+). The enzyme catalyses a 1-acyl-sn-glycero-3-phosphocholine + H2O = sn-glycerol 3-phosphocholine + a fatty acid + H(+). It catalyses the reaction 1-hexadecanoyl-sn-glycero-3-phosphocholine + H2O = sn-glycerol 3-phosphocholine + hexadecanoate + H(+). It carries out the reaction 2 1-hexadecanoyl-sn-glycero-3-phosphocholine = 1,2-dihexadecanoyl-sn-glycero-3-phosphocholine + sn-glycerol 3-phosphocholine. The catalysed reaction is 1-hexadecanoyl-sn-glycero-3-phosphoethanolamine + 1-hexadecanoyl-sn-glycero-3-phosphocholine = 1,2-dihexadecanoyl-sn-glycero-3-phosphoethanolamine + sn-glycerol 3-phosphocholine. The enzyme catalyses 1-hexadecanoyl-sn-glycero-3-phosphoethanolamine + 1-hexadecanoyl-sn-glycero-3-phosphocholine = sn-glycero-3-phosphoethanolamine + 1,2-dihexadecanoyl-sn-glycero-3-phosphocholine. It catalyses the reaction 2 1-hexadecanoyl-sn-glycero-3-phosphoethanolamine = 1,2-dihexadecanoyl-sn-glycero-3-phosphoethanolamine + sn-glycero-3-phosphoethanolamine. It carries out the reaction 1-O-hexadecyl-sn-glycero-3-phosphocholine + 1-hexadecanoyl-sn-glycero-3-phosphocholine = 1-O-hexadecyl-2-hexadecanoyl-sn-glycero-3-phosphocholine + sn-glycerol 3-phosphocholine. The catalysed reaction is a 1-O-(1Z-alkenyl)-sn-glycero-3-phosphoethanolamine + 1-hexadecanoyl-sn-glycero-3-phosphocholine = 1-O-(1Z)-alkenyl-2-hexadecanoyl-sn-glycero-3-phosphoethanolamine + sn-glycerol 3-phosphocholine. The enzyme catalyses 1-O-hexadecyl-sn-glycero-3-phosphocholine + 1-hexadecanoyl-sn-glycero-3-phosphoethanolamine = 1-O-hexadecyl-2-hexadecanoyl-sn-glycero-3-phosphocholine + sn-glycero-3-phosphoethanolamine. It catalyses the reaction 1-octadecanoyl-2-(5Z,8Z,11Z,14Z)-eicosatetraenoyl-sn-glycero-3-phosphoethanolamine + 1-hexadecanoyl-sn-glycero-3-phosphocholine = 1-octadecanoyl-sn-glycero-3-phosphoethanolamine + 1-hexadecanoyl-2-(5Z,8Z,11Z,14Z-eicosatetraenoyl)-sn-glycero-3-phosphocholine. It carries out the reaction 1-octadecanoyl-2-(5Z,8Z,11Z,14Z)-eicosatetraenoyl-sn-glycero-3-phosphoethanolamine + 1-O-hexadecyl-sn-glycero-3-phosphocholine = 1-octadecanoyl-sn-glycero-3-phosphoethanolamine + 1-O-hexadecyl-2-(5Z,8Z,11Z,14Z)-eicosatetraenoyl-sn-glycero-3-phosphocholine. The catalysed reaction is 1-hexadecanoyl-2-(9Z,12Z-octadecadienoyl)-sn-glycero-3-phosphocholine + a 1-O-(1Z-alkenyl)-sn-glycero-3-phosphoethanolamine = 1-O-(1Z-alkenyl)-2-(9Z,12Z-octadecadienoyl)-sn-glycero-3-phosphoethanolamine + 1-hexadecanoyl-sn-glycero-3-phosphocholine. The enzyme catalyses 1-hexadecanoyl-2-(5Z,8Z,11Z,14Z-eicosatetraenoyl)-sn-glycero-3-phosphocholine + a 1-O-(1Z-alkenyl)-sn-glycero-3-phosphoethanolamine = 1-O-(1Z)-alkenyl-2-(5Z,8Z,11Z,14Z)-eicosatetraenoyl-sn-glycero-3-phosphoethanolamine + 1-hexadecanoyl-sn-glycero-3-phosphocholine. Its function is as follows. Calcium-independent phospholipase, lysophospholipase and O-acyltransferase involved in phospholipid remodeling. Preferentially hydrolyzes the ester bond of the fatty acyl group attached at sn-2 position of phospholipids with choline and ethanolamine head groups, producing lysophospholipids that are used in deacylation-reacylation cycles. Transfers the sn-1 fatty acyl from one lysophospholipid molecule to the sn-2 position of another lysophospholipid to form diacyl, alkylacyl and alkenylacyl glycerophospholipids. Cleaves ester bonds but not alkyl or alkenyl ether bonds at the sn-1 position of lysophospholipids. Catalyzes sn-2 fatty acyl transfer from phospholipids to the sn-2 position of 1-O-alkyl or 1-O-alkenyl lysophospholipids with lower efficiency. The polypeptide is Cytosolic phospholipase A2 gamma (Mus musculus (Mouse)).